Reading from the N-terminus, the 393-residue chain is Beta-ureidopropionase (393 aa).

The CN hydrolase domain occupies 72-344 (VRVGLVQNRI…DGLLVTELNL (273 aa)). Catalysis depends on glutamate 119, which acts as the Proton acceptor. The Proton donor role is filled by lysine 196. Catalysis depends on cysteine 233, which acts as the Nucleophile. Position 378 is a phosphoserine (serine 378).

The protein belongs to the carbon-nitrogen hydrolase superfamily. BUP family. In terms of assembly, homodimer, homotetramer, homooctamer; can also form higher homooligomers.

The protein resides in the cytoplasm. It carries out the reaction 3-(carbamoylamino)propanoate + H2O + 2 H(+) = beta-alanine + NH4(+) + CO2. The catalysed reaction is 3-(carbamoylamino)-2-methylpropanoate + H2O + 2 H(+) = (R)-3-amino-2-methylpropanoate + NH4(+) + CO2. Its pathway is amino-acid biosynthesis; beta-alanine biosynthesis. Its function is as follows. Catalyzes a late step in pyrimidine degradation. Converts N-carbamoyl-beta-alanine (3-ureidopropanoate) into beta-alanine, ammonia and carbon dioxide. Likewise, converts N-carbamoyl-beta-aminoisobutyrate (3-ureidoisobutyrate) into beta-aminoisobutyrate, ammonia and carbon dioxide. The protein is Beta-ureidopropionase (Upb1) of Mus musculus (Mouse).